We begin with the raw amino-acid sequence, 72 residues long: Translation initiation factor IF-1 (72 aa).

The S1-like domain occupies 1 to 72 (MAKEDMIEVE…TRGRITYRFK (72 aa)).

Belongs to the IF-1 family. As to quaternary structure, component of the 30S ribosomal translation pre-initiation complex which assembles on the 30S ribosome in the order IF-2 and IF-3, IF-1 and N-formylmethionyl-tRNA(fMet); mRNA recruitment can occur at any time during PIC assembly.

The protein localises to the cytoplasm. One of the essential components for the initiation of protein synthesis. Stabilizes the binding of IF-2 and IF-3 on the 30S subunit to which N-formylmethionyl-tRNA(fMet) subsequently binds. Helps modulate mRNA selection, yielding the 30S pre-initiation complex (PIC). Upon addition of the 50S ribosomal subunit IF-1, IF-2 and IF-3 are released leaving the mature 70S translation initiation complex. In Enterococcus faecalis (strain ATCC 700802 / V583), this protein is Translation initiation factor IF-1.